The sequence spans 762 residues: 5-methyltetrahydropteroyltriglutamate--homocysteine methyltransferase (762 aa).

Residues 17-20 and Lys111 each bind 5-methyltetrahydropteroyltri-L-glutamate; that span reads REWK. Residues 435 to 437 and Glu488 each bind L-homocysteine; that span reads IGS. Residues 435-437 and Glu488 each bind L-methionine; that span reads IGS. Residues 519–520 and Trp565 each bind 5-methyltetrahydropteroyltri-L-glutamate; that span reads RC. L-homocysteine is bound at residue Asp603. Asp603 is a binding site for L-methionine. Glu609 is a binding site for 5-methyltetrahydropteroyltri-L-glutamate. His645, Cys647, and Glu669 together coordinate Zn(2+). His698 acts as the Proton donor in catalysis. Zn(2+) is bound at residue Cys730.

Belongs to the vitamin-B12 independent methionine synthase family. Zn(2+) serves as cofactor.

It carries out the reaction 5-methyltetrahydropteroyltri-L-glutamate + L-homocysteine = tetrahydropteroyltri-L-glutamate + L-methionine. The protein operates within amino-acid biosynthesis; L-methionine biosynthesis via de novo pathway; L-methionine from L-homocysteine (MetE route): step 1/1. In terms of biological role, catalyzes the transfer of a methyl group from 5-methyltetrahydrofolate to homocysteine resulting in methionine formation. This Bacillus cereus (strain ATCC 10987 / NRS 248) protein is 5-methyltetrahydropteroyltriglutamate--homocysteine methyltransferase.